The chain runs to 756 residues: 5-methyltetrahydropteroyltriglutamate--homocysteine methyltransferase (756 aa).

5-methyltetrahydropteroyltri-L-glutamate-binding positions include 16-19 (RELK) and Lys116. Residues 435-437 (IGS) and Glu488 contribute to the L-homocysteine site. L-methionine-binding positions include 435-437 (IGS) and Glu488. 5-methyltetrahydropteroyltri-L-glutamate is bound by residues 519–520 (RC) and Trp565. Residue Asp603 participates in L-homocysteine binding. Residue Asp603 participates in L-methionine binding. Glu609 contributes to the 5-methyltetrahydropteroyltri-L-glutamate binding site. Zn(2+) contacts are provided by His645, Cys647, and Glu669. Catalysis depends on His698, which acts as the Proton donor. Cys730 is a binding site for Zn(2+).

Belongs to the vitamin-B12 independent methionine synthase family. Zn(2+) serves as cofactor.

The catalysed reaction is 5-methyltetrahydropteroyltri-L-glutamate + L-homocysteine = tetrahydropteroyltri-L-glutamate + L-methionine. It functions in the pathway amino-acid biosynthesis; L-methionine biosynthesis via de novo pathway; L-methionine from L-homocysteine (MetE route): step 1/1. Catalyzes the transfer of a methyl group from 5-methyltetrahydrofolate to homocysteine resulting in methionine formation. This chain is 5-methyltetrahydropteroyltriglutamate--homocysteine methyltransferase, found in Marinobacter nauticus (strain ATCC 700491 / DSM 11845 / VT8) (Marinobacter aquaeolei).